The sequence spans 136 residues: Histone H3 (136 aa).

A disordered region spans residues 1 to 43 (MARTKQTARKSTGGKAPRKQLATKAARKSAPATGGVKKPHRYR). Lysine 5 carries the post-translational modification N6-methylated lysine. Residue lysine 10 is modified to N6-acetyllysine; alternate. Position 10 is an N6-methylated lysine; alternate (lysine 10). Phosphoserine is present on serine 11. N6-acetyllysine occurs at positions 15 and 24. An N6-methylated lysine mark is found at lysine 28, lysine 37, and lysine 80.

The protein belongs to the histone H3 family. The nucleosome is a histone octamer containing two molecules each of H2A, H2B, H3 and H4 assembled in one H3-H4 heterotetramer and two H2A-H2B heterodimers. The octamer wraps approximately 147 bp of DNA. In terms of processing, acetylation is generally linked to gene activation. Methylation at Lys-5 is linked to gene activation. Methylation at Lys-10 is linked to gene repression.

It localises to the nucleus. It is found in the chromosome. Functionally, core component of nucleosome. Nucleosomes wrap and compact DNA into chromatin, limiting DNA accessibility to the cellular machineries which require DNA as a template. Histones thereby play a central role in transcription regulation, DNA repair, DNA replication and chromosomal stability. DNA accessibility is regulated via a complex set of post-translational modifications of histones, also called histone code, and nucleosome remodeling. This is Histone H3 from Platynereis dumerilii (Dumeril's clam worm).